Reading from the N-terminus, the 291-residue chain is 33 kDa chaperonin (291 aa).

Disulfide bonds link Cys235/Cys237 and Cys268/Cys271.

This sequence belongs to the HSP33 family. Post-translationally, under oxidizing conditions two disulfide bonds are formed involving the reactive cysteines. Under reducing conditions zinc is bound to the reactive cysteines and the protein is inactive.

Its subcellular location is the cytoplasm. Functionally, redox regulated molecular chaperone. Protects both thermally unfolding and oxidatively damaged proteins from irreversible aggregation. Plays an important role in the bacterial defense system toward oxidative stress. The chain is 33 kDa chaperonin from Bacillus pumilus (strain SAFR-032).